A 394-amino-acid chain; its full sequence is L-lactate dehydrogenase (394 aa).

Positions 1 to 380 (MIISAASDYR…SRDSLVQNAE (380 aa)) constitute an FMN hydroxy acid dehydrogenase domain. A substrate-binding site is contributed by Y24. Residues S106 and Q127 each contribute to the FMN site. Y129 lines the substrate pocket. T155 is a binding site for FMN. R164 provides a ligand contact to substrate. K251 is an FMN binding site. H275 acts as the Proton acceptor in catalysis. R278 lines the substrate pocket. An FMN-binding site is contributed by 306-330 (DSGIRNGLDVVRMIALGADSVLLGR).

Belongs to the FMN-dependent alpha-hydroxy acid dehydrogenase family. It depends on FMN as a cofactor.

It is found in the cell inner membrane. The catalysed reaction is (S)-lactate + A = pyruvate + AH2. Functionally, catalyzes the conversion of L-lactate to pyruvate. Is coupled to the respiratory chain. This Klebsiella pneumoniae subsp. pneumoniae (strain ATCC 700721 / MGH 78578) protein is L-lactate dehydrogenase.